The primary structure comprises 82 residues: Small ribosomal subunit protein bS16 (82 aa).

It belongs to the bacterial ribosomal protein bS16 family.

In Proteus mirabilis (strain HI4320), this protein is Small ribosomal subunit protein bS16.